Consider the following 194-residue polypeptide: Imidazoleglycerol-phosphate dehydratase (194 aa).

The protein belongs to the imidazoleglycerol-phosphate dehydratase family.

It is found in the cytoplasm. It catalyses the reaction D-erythro-1-(imidazol-4-yl)glycerol 3-phosphate = 3-(imidazol-4-yl)-2-oxopropyl phosphate + H2O. Its pathway is amino-acid biosynthesis; L-histidine biosynthesis; L-histidine from 5-phospho-alpha-D-ribose 1-diphosphate: step 6/9. The chain is Imidazoleglycerol-phosphate dehydratase from Bacillus cereus (strain AH187).